Consider the following 306-residue polypeptide: Ribonuclease Z (306 aa).

The Zn(2+) site is built by His-63, His-65, Asp-67, His-68, His-141, Asp-208, and His-266. Residue Asp-67 is the Proton acceptor of the active site.

This sequence belongs to the RNase Z family. Homodimer. It depends on Zn(2+) as a cofactor.

The catalysed reaction is Endonucleolytic cleavage of RNA, removing extra 3' nucleotides from tRNA precursor, generating 3' termini of tRNAs. A 3'-hydroxy group is left at the tRNA terminus and a 5'-phosphoryl group is left at the trailer molecule.. Its function is as follows. Zinc phosphodiesterase, which displays some tRNA 3'-processing endonuclease activity. Probably involved in tRNA maturation, by removing a 3'-trailer from precursor tRNA. This is Ribonuclease Z from Protochlamydia amoebophila (strain UWE25).